A 107-amino-acid polypeptide reads, in one-letter code: UPF0060 membrane protein mll7841 (107 aa).

Helical transmembrane passes span 4 to 24, 30 to 50, 60 to 80, and 87 to 107; these read LFYT…WAWW, PLWL…LALV, AAYG…VEGV, and LAGA…PRGA.

This sequence belongs to the UPF0060 family.

It localises to the cell inner membrane. In Mesorhizobium japonicum (strain LMG 29417 / CECT 9101 / MAFF 303099) (Mesorhizobium loti (strain MAFF 303099)), this protein is UPF0060 membrane protein mll7841.